Consider the following 563-residue polypeptide: Tripeptidyl-peptidase 1 (563 aa).

An N-terminal signal peptide occupies residues 1–19; it reads MGLQACLLGLFALILSGKC. The propeptide at 20–195 is removed in mature form; the sequence is SYSPEPDQRR…PEPQVTGTVG (176 aa). C111 and C122 are disulfide-bonded. The Peptidase S53 domain maps to 199–563; the sequence is GVTPSVIRKR…PALLKTLLNP (365 aa). N-linked (GlcNAc...) asparagine glycosylation is found at N210 and N222. Residues E272 and D276 each act as charge relay system in the active site. N-linked (GlcNAc...) asparagine glycans are attached at residues N286, N313, and N443. 2 disulfides stabilise this stretch: C365–C526 and C522–C537. S475 serves as the catalytic Charge relay system. The Ca(2+) site is built by D517 and V518. Ca(2+) is bound by residues G539, G541, and D543.

In terms of assembly, monomer. Interacts with CLN5. Interacts with CLN3. Requires Ca(2+) as cofactor. Post-translationally, activated by autocatalytic proteolytical processing upon acidification. N-glycosylation is required for processing and activity.

The protein resides in the lysosome. It is found in the melanosome. It carries out the reaction Release of an N-terminal tripeptide from a polypeptide, but also has endopeptidase activity.. In terms of biological role, lysosomal serine protease with tripeptidyl-peptidase I activity. May act as a non-specific lysosomal peptidase which generates tripeptides from the breakdown products produced by lysosomal proteinases. Requires substrates with an unsubstituted N-terminus. The polypeptide is Tripeptidyl-peptidase 1 (TPP1) (Macaca fascicularis (Crab-eating macaque)).